The following is a 376-amino-acid chain: CYP enzymes assisting alcohol dehydrogenase (376 aa).

Positions 43, 45, 64, 94, 97, 100, 108, and 173 each coordinate Zn(2+). Residue Thr-45 participates in NAD(+) binding. Substrate contacts are provided by Thr-45 and His-64. NAD(+)-binding positions include 199-204 (GLGAVG), Asp-223, Lys-228, 294-296 (LGA), Phe-320, and Lys-371.

This sequence belongs to the zinc-containing alcohol dehydrogenase family. Class-III subfamily. As to quaternary structure, homodimer. Zn(2+) serves as cofactor.

The protein operates within alkaloid biosynthesis. In terms of biological role, may be a positive catalyzer of strictosidine production by assisting secologanin biosynthesis, thus being involved in monoterpene indole alkaloids accumulation. In Catharanthus roseus (Madagascar periwinkle), this protein is CYP enzymes assisting alcohol dehydrogenase.